The following is a 255-amino-acid chain: ParA family protein CPn_0805/CP_1066/CPj0805/CpB0834 (255 aa).

The protein belongs to the ParA family.

In Chlamydia pneumoniae (Chlamydophila pneumoniae), this protein is ParA family protein CPn_0805/CP_1066/CPj0805/CpB0834.